Here is a 376-residue protein sequence, read N- to C-terminus: uncharacterized protein (376 aa).

2 consecutive transmembrane segments (helical) span residues 153 to 173 (QGTL…VLFA) and 188 to 208 (HRPF…LAVY).

The protein resides in the membrane. This is an uncharacterized protein from Saccharomyces cerevisiae (strain ATCC 204508 / S288c) (Baker's yeast).